The following is a 153-amino-acid chain: Small ribosomal subunit protein bS16 (153 aa).

Residues 130 to 153 (EAEAAAAAEEAPAEEAAEEAPAEA) form a disordered region. The segment covering 140–153 (APAEEAAEEAPAEA) has biased composition (acidic residues).

The protein belongs to the bacterial ribosomal protein bS16 family.

The sequence is that of Small ribosomal subunit protein bS16 from Bifidobacterium longum subsp. infantis (strain ATCC 15697 / DSM 20088 / JCM 1222 / NCTC 11817 / S12).